A 136-amino-acid chain; its full sequence is Protein LITTLE ZIPPER 1 (136 aa).

The stretch at 97 to 122 (ENQNIIRENEKLKKKALLLHQENKTL) forms a coiled coil.

As to quaternary structure, interacts with REV. Expressed in the adaxial epidermis of the cotyledons and in the vascular cylinder of wild-type torpedo stage embryos.

Its function is as follows. Competitive inhibitor of the HD-ZIPIII transcription factors in shoot apical meristem (SAM) development. Acts by forming non-functional heterodimers. Part of a negative feedback loop. Essential for proper functioning of stem cells in the SAM. The protein is Protein LITTLE ZIPPER 1 of Arabidopsis thaliana (Mouse-ear cress).